The chain runs to 111 residues: MRNITISSERALEVIKAPQISEKSTFIAEKTKQIIFYVSRDANKTEIKSAIEQIWRSQNIQVKSVQVVNVKGKKKRFGRYLGQKSDWKKAFVSLKGDREIDFTDVKLFEDK.

It belongs to the universal ribosomal protein uL23 family. In terms of assembly, part of the 50S ribosomal subunit. Contacts protein L29, and trigger factor when it is bound to the ribosome.

Functionally, one of the early assembly proteins it binds 23S rRNA. One of the proteins that surrounds the polypeptide exit tunnel on the outside of the ribosome. Forms the main docking site for trigger factor binding to the ribosome. This Nitrosomonas europaea (strain ATCC 19718 / CIP 103999 / KCTC 2705 / NBRC 14298) protein is Large ribosomal subunit protein uL23.